Reading from the N-terminus, the 190-residue chain is Ribosome maturation factor RimM (190 aa).

The region spanning 102-190 is the PRC barrel domain; the sequence is EDEYYWIDLV…RIDSDWPLED (89 aa).

The protein belongs to the RimM family. Binds ribosomal protein uS19.

The protein resides in the cytoplasm. Its function is as follows. An accessory protein needed during the final step in the assembly of 30S ribosomal subunit, possibly for assembly of the head region. Essential for efficient processing of 16S rRNA. May be needed both before and after RbfA during the maturation of 16S rRNA. It has affinity for free ribosomal 30S subunits but not for 70S ribosomes. The protein is Ribosome maturation factor RimM of Bordetella avium (strain 197N).